Reading from the N-terminus, the 151-residue chain is MSKELIVSKIENGTVIDHIPAGRALAVLRVLGITGKEGARVALVMNVESKKLGRKDIVKIEGRELTPEEVNIISAVAPTATINIIRNFEVVRKFNVTPPEVIRGRFKCKNPTCITNAPREPVEPTFYLVRREPPLFVCAYCGRYHELGDLV.

Residues C108, C113, C138, and C141 each coordinate Zn(2+).

This sequence belongs to the PyrI family. Contains catalytic and regulatory chains. Zn(2+) serves as cofactor.

Its function is as follows. Involved in allosteric regulation of aspartate carbamoyltransferase. This chain is Aspartate carbamoyltransferase regulatory chain, found in Pyrobaculum arsenaticum (strain DSM 13514 / JCM 11321 / PZ6).